The primary structure comprises 556 residues: 2-succinyl-5-enolpyruvyl-6-hydroxy-3-cyclohexene-1-carboxylate synthase (556 aa).

Belongs to the TPP enzyme family. MenD subfamily. As to quaternary structure, homodimer. Mg(2+) serves as cofactor. It depends on Mn(2+) as a cofactor. The cofactor is thiamine diphosphate.

It catalyses the reaction isochorismate + 2-oxoglutarate + H(+) = 5-enolpyruvoyl-6-hydroxy-2-succinyl-cyclohex-3-ene-1-carboxylate + CO2. Its pathway is quinol/quinone metabolism; 1,4-dihydroxy-2-naphthoate biosynthesis; 1,4-dihydroxy-2-naphthoate from chorismate: step 2/7. It functions in the pathway quinol/quinone metabolism; menaquinone biosynthesis. Catalyzes the thiamine diphosphate-dependent decarboxylation of 2-oxoglutarate and the subsequent addition of the resulting succinic semialdehyde-thiamine pyrophosphate anion to isochorismate to yield 2-succinyl-5-enolpyruvyl-6-hydroxy-3-cyclohexene-1-carboxylate (SEPHCHC). This chain is 2-succinyl-5-enolpyruvyl-6-hydroxy-3-cyclohexene-1-carboxylate synthase, found in Klebsiella pneumoniae subsp. pneumoniae (strain ATCC 700721 / MGH 78578).